The sequence spans 624 residues: Actin-related protein 8 (624 aa).

At M1 the chain carries N-acetylmethionine. The span at 1-25 (MTQAEKGEAENGKEKGGEKEKEQRG) shows a compositional bias: basic and acidic residues. Residues 1 to 29 (MTQAEKGEAENGKEKGGEKEKEQRGVKRP) form a disordered region. Positions 55 and 56 each coordinate ATP. A Phosphoserine modification is found at S132. An ATP-binding site is contributed by 283–286 (DVGD). Residue S412 is modified to Phosphoserine. Residues 430-462 (SKQEQSAKATADRKSASKPIGFEGDLRGQSSDL) are disordered.

Belongs to the actin family. ARP8 subfamily. Component of the chromatin remodeling INO80 complex; specifically part of a complex module associated with the DBINO domain of INO80. Exists as monomers and dimers, but the dimer is most probably the biologically relevant form required for stable interactions with histones that exploits the twofold symmetry of the nucleosome core.

The protein localises to the nucleus. It is found in the chromosome. Its function is as follows. Plays an important role in the functional organization of mitotic chromosomes. Exhibits low basal ATPase activity, and unable to polymerize. Functionally, proposed core component of the chromatin remodeling INO80 complex which is involved in transcriptional regulation, DNA replication and probably DNA repair. Required for the recruitment of INO80 (and probably the INO80 complex) to sites of DNA damage Strongly prefer nucleosomes and H3-H4 tetramers over H2A-H2B dimers, suggesting it may act as a nucleosome recognition module within the complex. The chain is Actin-related protein 8 (ACTR8) from Bos taurus (Bovine).